Reading from the N-terminus, the 679-residue chain is DNA-directed RNA polymerase subunit beta' (679 aa).

The Zn(2+) site is built by C69, C71, C87, and C90. The Mg(2+) site is built by D489, D491, and D493.

It belongs to the RNA polymerase beta' chain family. RpoC1 subfamily. In plastids the minimal PEP RNA polymerase catalytic core is composed of four subunits: alpha, beta, beta', and beta''. When a (nuclear-encoded) sigma factor is associated with the core the holoenzyme is formed, which can initiate transcription. Mg(2+) is required as a cofactor. The cofactor is Zn(2+).

It is found in the plastid. It localises to the chloroplast. The enzyme catalyses RNA(n) + a ribonucleoside 5'-triphosphate = RNA(n+1) + diphosphate. In terms of biological role, DNA-dependent RNA polymerase catalyzes the transcription of DNA into RNA using the four ribonucleoside triphosphates as substrates. This Oenothera argillicola (Appalachian evening primrose) protein is DNA-directed RNA polymerase subunit beta'.